Here is a 339-residue protein sequence, read N- to C-terminus: Erlin-2 (339 aa).

Over 1 to 3 the chain is Cytoplasmic; the sequence is MAQ. The helical transmembrane segment at 4 to 24 threads the bilayer; that stretch reads LGAVVAVASSFFCASLFSAVH. Residues 25–339 lie on the Lumenal side of the membrane; the sequence is KIEEGHIGVY…EPLETATKEN (315 aa). N-linked (GlcNAc...) asparagine glycosylation occurs at N106. The tract at residues 177-309 is interaction with ERLIN1; the sequence is EAIRRNYELM…DIPNMFMDSA (133 aa). K267 is modified (N6-acetyllysine).

The protein belongs to the band 7/mec-2 family. As to quaternary structure, forms a heteromeric complex with ERLIN1. In complex with ERLIN1, interacts with RNF170. Interacts with activated ITPR1, independently of the degree of ITPR1 polyubiquitination. Interacts with SCAP, INSIG1, SREBF1 and SREBF2 under cholesterol sufficiency conditions; indicative for an association with the SCAP-SREBP-INSIG complex. Probably part of an AMFR/gp78 and INSIG1-containing ubiquitin ligase complex involved in ERAD of HMGCR. Interacts with TMUB1; TMUB1 bridges the association with AMFR. Interacts with SYVN1 and RNF139. Interacts with TMEM259. Interacts with TMEM41B. Post-translationally, deubiquitinated by USP25; leading to stabilization. As to expression, ubiquitous.

Its subcellular location is the endoplasmic reticulum membrane. Functionally, component of the ERLIN1/ERLIN2 complex which mediates the endoplasmic reticulum-associated degradation (ERAD) of inositol 1,4,5-trisphosphate receptors (IP3Rs) such as ITPR1. Promotes sterol-accelerated ERAD of HMGCR probably implicating an AMFR/gp78-containing ubiquitin ligase complex. Involved in regulation of cellular cholesterol homeostasis by regulation the SREBP signaling pathway. May promote ER retention of the SCAP-SREBF complex. In Homo sapiens (Human), this protein is Erlin-2 (ERLIN2).